Reading from the N-terminus, the 115-residue chain is Holo-[acyl-carrier-protein] synthase (115 aa).

The Mg(2+) site is built by D6 and E51.

Belongs to the P-Pant transferase superfamily. AcpS family. The cofactor is Mg(2+).

The protein resides in the cytoplasm. The enzyme catalyses apo-[ACP] + CoA = holo-[ACP] + adenosine 3',5'-bisphosphate + H(+). Functionally, transfers the 4'-phosphopantetheine moiety from coenzyme A to a Ser of acyl-carrier-protein. This is Holo-[acyl-carrier-protein] synthase from Campylobacter jejuni subsp. jejuni serotype O:23/36 (strain 81-176).